Reading from the N-terminus, the 289-residue chain is MQGILSIQSHVSFGHAGNSSAVFPMQRMGFEVWPIHTVQFSNHTQHQEGWTGRAFSADDISELVRGLGNIGALEKCQAVLTGYQGSAEQCLAVEDTVTKVKQANPEALYVCDPVMGAPDKGCIVAPGIAENLLNRLMPMADVIVPNQFELSQFAEMEIHTLDDAINACQRALAKGPKVVLVKHLYCLSDDSFNMLLATSEGTYLAKRPHFEFAKAPVGAGDLISAIFTAGLLKGWTPKQAFQHCHDACYGVLNATYQAGEWELQTIAAQQEFVEPSAHFPLEEVTLSQA.

Substrate-binding positions include Ser-9 and 44 to 45; that span reads TQ. 4 residues coordinate ATP: Asp-112, Val-144, Glu-149, and Lys-182. Asp-221 provides a ligand contact to substrate.

This sequence belongs to the pyridoxine kinase family. PdxY subfamily. Homodimer. Mg(2+) is required as a cofactor.

It carries out the reaction pyridoxal + ATP = pyridoxal 5'-phosphate + ADP + H(+). The protein operates within cofactor metabolism; pyridoxal 5'-phosphate salvage; pyridoxal 5'-phosphate from pyridoxal: step 1/1. Functionally, pyridoxal kinase involved in the salvage pathway of pyridoxal 5'-phosphate (PLP). Catalyzes the phosphorylation of pyridoxal to PLP. The chain is Pyridoxal kinase PdxY from Vibrio campbellii (strain ATCC BAA-1116).